We begin with the raw amino-acid sequence, 420 residues long: Serine hydroxymethyltransferase (420 aa).

(6S)-5,6,7,8-tetrahydrofolate contacts are provided by residues Leu123 and 127 to 129 (GHL). Lys232 carries the N6-(pyridoxal phosphate)lysine modification.

It belongs to the SHMT family. In terms of assembly, homodimer. The cofactor is pyridoxal 5'-phosphate.

The protein localises to the cytoplasm. It catalyses the reaction (6R)-5,10-methylene-5,6,7,8-tetrahydrofolate + glycine + H2O = (6S)-5,6,7,8-tetrahydrofolate + L-serine. It participates in one-carbon metabolism; tetrahydrofolate interconversion. Its pathway is amino-acid biosynthesis; glycine biosynthesis; glycine from L-serine: step 1/1. Its function is as follows. Catalyzes the reversible interconversion of serine and glycine with tetrahydrofolate (THF) serving as the one-carbon carrier. This reaction serves as the major source of one-carbon groups required for the biosynthesis of purines, thymidylate, methionine, and other important biomolecules. Also exhibits THF-independent aldolase activity toward beta-hydroxyamino acids, producing glycine and aldehydes, via a retro-aldol mechanism. This chain is Serine hydroxymethyltransferase, found in Ehrlichia chaffeensis (strain ATCC CRL-10679 / Arkansas).